The chain runs to 1001 residues: X-linked retinitis pigmentosa GTPase regulator (1001 aa).

RCC1 repeat units lie at residues 54 to 105, 106 to 158, 159 to 208, 209 to 261, 262 to 313, and 314 to 367; these read NKLY…STDT, GGVY…LTED, GKLF…VTMD, GELY…LTEK, VVYA…MTEL, and GLLY…FATP. A disordered region spans residues 404-428; that stretch reads SLSARLRRRERERPPCSASMVGTLP. Serine 518 bears the Phosphoserine mark. Basic and acidic residues-rich tracts occupy residues 631 to 641 and 659 to 671; these read KKIRESEENSK and EDNK…RRSS. Disordered regions lie at residues 631 to 738, 794 to 869, 902 to 925, and 962 to 1001; these read KKIR…WYDR, NLEF…EGSE, PKGH…DPTS, and GDQI…CTIL. 2 stretches are compositionally biased toward acidic residues: residues 679–691 and 717–731; these read SETE…DSYM and EKDE…EVET. Composition is skewed to basic and acidic residues over residues 794 to 818, 847 to 857, and 902 to 911; these read NLEF…EKEA, EERKEGEKEIV, and PKGHMYDRVK. A compositionally biased stretch (polar residues) spans 976–1001; the sequence is QNHMGQNLQDSTTPNMEGKSKSCTIL. Cysteine 998 carries the cysteine methyl ester modification. Cysteine 998 carries S-geranylgeranyl cysteine lipidation. Residues 999 to 1001 constitute a propeptide, removed in mature form; sequence TIL.

In terms of assembly, interacts with SPATA7. Interacts with PDE6D. Interacts with RPGRIP1 and RPGRIP1L; PDE6D, RPGRIP1 and RPGRIP1L may compete for the same binding sites. Interacts with NPM1. Interacts with PDE6D. Isoform 5 interacts (via N-terminus) with SMC1A and SMC3. Isoform 5 interacts with CEP290. Interacts with WHRN. Interacts with RAB37 and RAB8A (in GDP-bound forms); functions as GEF for RAB37 and RAB8A. Prenylated. Expressed in the retina (at protein level). Located mainly in the connecting cilia between the outer segment and inner segment and also observed in the outer plexiform layer, inner plexiform layer, and ganglion cell layer of the retinas. Isoform 1: Expressed in the retina (at protein level). Isoform 5: Expressed in the retina (at protein level). Expressed in the brain. Expressed in the testis (at protein level). Expressed in kidney (at protein level).

The protein localises to the golgi apparatus. The protein resides in the cytoplasm. It is found in the cytoskeleton. It localises to the microtubule organizing center. Its subcellular location is the centrosome. The protein localises to the cell projection. The protein resides in the cilium. It is found in the cilium basal body. It localises to the cilium axoneme. Its subcellular location is the flagellum axoneme. Functionally, acts as a guanine-nucleotide releasing factor (GEF) for RAB8A and RAB37 by promoting the conversion of inactive RAB-GDP to the active form RAB-GTP. GEF activity towards RAB8A may facilitate ciliary trafficking by modulating ciliary intracellular localization of RAB8A. GEF activity towards RAB37 maintains autophagic homeostasis and retinal function. Involved in photoreceptor integrity. May control cilia formation by regulating actin stress filaments and cell contractility. May be involved in microtubule organization and regulation of transport in primary cilia. Isoform 5 may play a critical role in spermatogenesis and in intraflagellar transport processes. The chain is X-linked retinitis pigmentosa GTPase regulator from Mus musculus (Mouse).